We begin with the raw amino-acid sequence, 503 residues long: Glutamate--tRNA ligase (503 aa).

The 'HIGH' region motif lies at 12 to 22 (PSPTGYLHVGG). The short motif at 259-263 (KLSKR) is the 'KMSKS' region element. ATP is bound at residue K262.

This sequence belongs to the class-I aminoacyl-tRNA synthetase family. Glutamate--tRNA ligase type 1 subfamily. In terms of assembly, monomer.

It is found in the cytoplasm. The enzyme catalyses tRNA(Glu) + L-glutamate + ATP = L-glutamyl-tRNA(Glu) + AMP + diphosphate. Its function is as follows. Catalyzes the attachment of glutamate to tRNA(Glu) in a two-step reaction: glutamate is first activated by ATP to form Glu-AMP and then transferred to the acceptor end of tRNA(Glu). This is Glutamate--tRNA ligase from Chloroherpeton thalassium (strain ATCC 35110 / GB-78).